The primary structure comprises 374 residues: Chaperone protein DnaJ (374 aa).

The 66-residue stretch at 5 to 70 (DYYEVLGVAK…QKRAAYDRYG (66 aa)) folds into the J domain. The CR-type zinc finger occupies 134–212 (GFDTEIRVPS…CDGVGRIRRN (79 aa)). Positions 147, 150, 164, 167, 186, 189, 200, and 203 each coordinate Zn(2+). 4 CXXCXGXG motif repeats span residues 147-154 (CDTCHGSG), 164-171 (CRTCGGSG), 186-193 (CPTCHGTG), and 200-207 (CPSCDGVG).

The protein belongs to the DnaJ family. As to quaternary structure, homodimer. The cofactor is Zn(2+).

It is found in the cytoplasm. In terms of biological role, participates actively in the response to hyperosmotic and heat shock by preventing the aggregation of stress-denatured proteins and by disaggregating proteins, also in an autonomous, DnaK-independent fashion. Unfolded proteins bind initially to DnaJ; upon interaction with the DnaJ-bound protein, DnaK hydrolyzes its bound ATP, resulting in the formation of a stable complex. GrpE releases ADP from DnaK; ATP binding to DnaK triggers the release of the substrate protein, thus completing the reaction cycle. Several rounds of ATP-dependent interactions between DnaJ, DnaK and GrpE are required for fully efficient folding. Also involved, together with DnaK and GrpE, in the DNA replication of plasmids through activation of initiation proteins. This chain is Chaperone protein DnaJ, found in Bordetella petrii (strain ATCC BAA-461 / DSM 12804 / CCUG 43448).